The sequence spans 875 residues: GATOR2 complex protein MIOS (875 aa).

WD repeat units follow at residues 58 to 100, 111 to 155, 182 to 221, 223 to 261, 265 to 306, and 395 to 437; these read SDTP…NSKF, KHAR…TPDI, GQND…QKMF, NTKA…KPVL, EQPK…TPIG, and RLRA…KQYT. A C4-type zinc finger spans residues 735–781; that stretch reads VSCNFCGKSISYSCSAVPHQGRGFSQYGVSGSPTKSKVTSCPGCRKP. Residues C737 and C740 each contribute to the Zn(2+) site. Phosphoserine occurs at positions 759 and 766. C775, C778, C788, C827, C830, H832, H835, H838, C849, C854, and C858 together coordinate Zn(2+). The RING-type; atypical zinc-finger motif lies at 782–863; sequence LPRCALCLIN…CTCKCMQLDT (82 aa).

The protein belongs to the WD repeat mio family. In terms of assembly, component of the GATOR2 subcomplex, composed of MIOS, SEC13, SEH1L, WDR24 and WDR59. The GATOR2 complex interacts with CASTOR1 and CASTOR2; the interaction is negatively regulated by arginine. CASTOR1 and CASTOR2 convey leucine availability via direct interaction with MIOS. The GATOR2 complex interacts with SESN1, SESN2 and SESN3; the interaction is negatively regulated by amino acids. Interacts with SAR1A and SAR1B; the interaction is direct, disrupted by leucine and mediates the interaction of SAR1A or SAR1B with the GATOR2 complex to negatively regulate the TORC1 signaling upon leucine deprivation.

It is found in the lysosome membrane. Its activity is regulated as follows. The GATOR2 complex is negatively regulated by the upstream amino acid sensors CASTOR1 and SESN2, which sequester the GATOR2 complex in absence of amino acids. In the presence of abundant amino acids, GATOR2 is released from CASTOR1 and SESN2 and activated. In terms of biological role, as a component of the GATOR2 complex, functions as an activator of the amino acid-sensing branch of the mTORC1 signaling pathway. The GATOR2 complex indirectly activates mTORC1 through the inhibition of the GATOR1 subcomplex. GATOR2 probably acts as an E3 ubiquitin-protein ligase toward GATOR1. In the presence of abundant amino acids, the GATOR2 complex mediates ubiquitination of the NPRL2 core component of the GATOR1 complex, leading to GATOR1 inactivation. In the absence of amino acids, GATOR2 is inhibited, activating the GATOR1 complex. Within the GATOR2 complex, MIOS is required to prevent autoubiquitination of WDR24, the catalytic subunit of the complex. The GATOR2 complex is required for brain myelination. The polypeptide is GATOR2 complex protein MIOS (Homo sapiens (Human)).